A 338-amino-acid polypeptide reads, in one-letter code: Eukaryotic translation initiation factor 3 subunit H (338 aa).

The MPN domain maps to V22–A154.

Belongs to the eIF-3 subunit H family. Component of the eukaryotic translation initiation factor 3 (eIF-3) complex. The eIF-3 complex interacts with pix. Interacts with mxt.

It localises to the cytoplasm. In terms of biological role, component of the eukaryotic translation initiation factor 3 (eIF-3) complex, which is involved in protein synthesis of a specialized repertoire of mRNAs and, together with other initiation factors, stimulates binding of mRNA and methionyl-tRNAi to the 40S ribosome. The eIF-3 complex specifically targets and initiates translation of a subset of mRNAs involved in cell proliferation. The sequence is that of Eukaryotic translation initiation factor 3 subunit H from Drosophila erecta (Fruit fly).